A 290-amino-acid polypeptide reads, in one-letter code: Phycobilisome 32.3 kDa linker polypeptide, phycocyanin-associated, rod (290 aa).

Residues 1–179 (MPVTVAASRL…LQRGYANSDR (179 aa)) form the PBS-linker domain. A CpcD-like domain is found at 236–288 (DQVVRVEVAALSTPRYPRIRRSSRVFFVPVSRLSQKLQEIQRMGGRVASISPA).

It belongs to the phycobilisome linker protein family.

Its subcellular location is the cellular thylakoid membrane. Rod linker protein, associated with phycocyanin. Linker polypeptides determine the state of aggregation and the location of the disk-shaped phycobiliprotein units within the phycobilisome and modulate their spectroscopic properties in order to mediate a directed and optimal energy transfer. The protein is Phycobilisome 32.3 kDa linker polypeptide, phycocyanin-associated, rod (cpcC) of Picosynechococcus sp. (strain ATCC 27264 / PCC 7002 / PR-6) (Agmenellum quadruplicatum).